The chain runs to 244 residues: Type III pantothenate kinase (244 aa).

7-14 provides a ligand contact to ATP; the sequence is DIGNTRLK. Residues Tyr-95 and 102 to 105 each bind substrate; that span reads GIDR. The Proton acceptor role is filled by Asp-104. Thr-126 provides a ligand contact to ATP. Thr-177 is a substrate binding site.

This sequence belongs to the type III pantothenate kinase family. Homodimer. NH4(+) is required as a cofactor. The cofactor is K(+).

It localises to the cytoplasm. It catalyses the reaction (R)-pantothenate + ATP = (R)-4'-phosphopantothenate + ADP + H(+). It participates in cofactor biosynthesis; coenzyme A biosynthesis; CoA from (R)-pantothenate: step 1/5. Its function is as follows. Catalyzes the phosphorylation of pantothenate (Pan), the first step in CoA biosynthesis. The chain is Type III pantothenate kinase from Acinetobacter baumannii (strain AB307-0294).